The chain runs to 169 residues: Crossover junction endodeoxyribonuclease RuvC (169 aa).

Active-site residues include D11, E71, and D143. Mg(2+) is bound by residues D11, E71, and D143.

It belongs to the RuvC family. As to quaternary structure, homodimer which binds Holliday junction (HJ) DNA. The HJ becomes 2-fold symmetrical on binding to RuvC with unstacked arms; it has a different conformation from HJ DNA in complex with RuvA. In the full resolvosome a probable DNA-RuvA(4)-RuvB(12)-RuvC(2) complex forms which resolves the HJ. Mg(2+) is required as a cofactor.

The protein resides in the cytoplasm. The catalysed reaction is Endonucleolytic cleavage at a junction such as a reciprocal single-stranded crossover between two homologous DNA duplexes (Holliday junction).. Functionally, the RuvA-RuvB-RuvC complex processes Holliday junction (HJ) DNA during genetic recombination and DNA repair. Endonuclease that resolves HJ intermediates. Cleaves cruciform DNA by making single-stranded nicks across the HJ at symmetrical positions within the homologous arms, yielding a 5'-phosphate and a 3'-hydroxyl group; requires a central core of homology in the junction. The consensus cleavage sequence is 5'-(A/T)TT(C/G)-3'. Cleavage occurs on the 3'-side of the TT dinucleotide at the point of strand exchange. HJ branch migration catalyzed by RuvA-RuvB allows RuvC to scan DNA until it finds its consensus sequence, where it cleaves and resolves the cruciform DNA. The polypeptide is Crossover junction endodeoxyribonuclease RuvC (Rhizobium etli (strain ATCC 51251 / DSM 11541 / JCM 21823 / NBRC 15573 / CFN 42)).